The chain runs to 942 residues: Inter-alpha-trypsin inhibitor heavy chain H5 (942 aa).

A signal peptide spans 1–16; the sequence is MLLLLGLCLGLSLCVG. The VIT domain occupies 35–161; sequence VPRQVRLLQR…KAAFFLSYEE (127 aa). 2 N-linked (GlcNAc...) asparagine glycosylation sites follow: N97 and N127. 2 disordered regions span residues 116–136 and 208–227; these read KKSGDRVKEKRNKTTEENGEK and SRQRGSGRGEDDSGPPPSTV. 3 N-linked (GlcNAc...) asparagine glycosylation sites follow: N231, N421, and N508. The 184-residue stretch at 295 to 478 folds into the VWFA domain; the sequence is NVVFVLDSSA…SQLIGFYDEI (184 aa). The interval 550–571 is disordered; that stretch reads QKAGKDVTGSPRPGGDGEGDTN. Residues N776, N795, and N862 are each glycosylated (N-linked (GlcNAc...) asparagine).

The protein belongs to the ITIH family. In terms of tissue distribution, abundantly expressed in placenta. Less abundant expression in mammary gland and ovary. Expression is barely detectable levels in all other tissues tested.

It is found in the secreted. Its function is as follows. May act as a tumor suppressor. In Homo sapiens (Human), this protein is Inter-alpha-trypsin inhibitor heavy chain H5 (ITIH5).